A 126-amino-acid chain; its full sequence is KRQQPGLWGRSADPQQAGLWGKRQQPGLWGRSADPQQAGLWGKRQNPGLWGRSADPQQAGLWGKRQHPGLWGRSADPQQAGLWGRSAGSGKRQERIGIWGRSAEPPQYKELEDLKQKSAIPKAKPQ.

Positions 1–2 (KR) are cleaved as a propeptide — 1. The interval 1-126 (KRQQPGLWGR…KSAIPKAKPQ (126 aa)) is disordered. Trp-8 carries the tryptophan amide modification. A propeptide spans 11–15 (SADPQ) (2). 2 positions are modified to tryptophan amide: Trp-20 and Trp-29. A propeptide spans 32–36 (SADPQ) (2). A tryptophan amide mark is found at Trp-41 and Trp-50. The propeptide at 53–57 (SADPQ) is 2. Tryptophan amide is present on residues Trp-62 and Trp-71. Positions 74–78 (SADPQ) are cleaved as a propeptide — 2. Trp-83 is modified (tryptophan amide). Positions 86-93 (SAGSGKRQ) are cleaved as a propeptide — 3. Tryptophan amide is present on Trp-99. The propeptide at 102–126 (SAEPPQYKELEDLKQKSAIPKAKPQ) is 4. The segment covering 107-116 (QYKELEDLKQ) has biased composition (basic and acidic residues).

This sequence belongs to the LWamide neuropeptide family.

It localises to the secreted. Functionally, metamorphosin A may be part of an internal signaling system involved in control of metamorphosis. In Anemonia sulcata (Mediterranean snakelocks sea anemone), this protein is LWamide neuropeptides.